The chain runs to 1792 residues: uncharacterized protein (1792 aa).

Residues 1 to 28 are compositionally biased toward low complexity; that stretch reads MNNNNNNNNNSNNNNNSNNNNNGNSNNN. Disordered stretches follow at residues 1–34, 162–187, 440–461, 544–568, 736–777, 837–979, 1044–1071, 1084–1106, 1160–1215, 1257–1290, 1651–1686, 1704–1731, and 1742–1761; these read MNNNNNNNNNSNNNNNSNNNNNGNSNNNFFSGKG, TNISNNNKQPISSNQHPYQQKQSHHH, KKRKKKERKKNENIYNNRNKSS, VIDDNKKRNKKEKKKTIPNNDSIIN, NKNK…INSN, TKGK…NDLK, VSKSNIPSSFSSPPKETNNKNDIDKEQS, NMNNEKSKDLYFNKNDIDNNDNK, TSSG…VLER, NITANNNNDNNKNNDNDNNNNNNDNIINNNNNNG, LRSKSDTKSKEHKKKDKKYKMLFKKKEGKGKPGRKK, PRKKYERVKPRKSKNAMMNEEKSGNSEK, and IENKHKSKKGRKPKESNLNN. Positions 169-182 are enriched in polar residues; sequence KQPISSNQHPYQQK. The span at 550–559 shows a compositional bias: basic residues; sequence KRNKKEKKKT. Low complexity predominate over residues 741-776; sequence PNNINSNDNNNKNDDNNNNNNKNVDGNNNNNNNINS. Residues 838-847 are compositionally biased toward basic residues; that stretch reads KGKKKGRKKK. The segment covering 856-873 has biased composition (basic and acidic residues); that stretch reads NIKEDIKSSKKDKKKDNI. The segment covering 874–924 has biased composition (low complexity); that stretch reads NDNNNDNNNDNNNDNNNDNNNDNNNDNNNDNNNNNNNNNNNNNNNNNNNHN. Over residues 943-954 the composition is skewed to basic residues; sequence KKKTRQYRKKSK. A compositionally biased stretch (basic and acidic residues) spans 955-966; the sequence is ITNDDNNEKIKQ. The segment covering 1045 to 1057 has biased composition (low complexity); it reads SKSNIPSSFSSPP. 3 stretches are compositionally biased toward basic and acidic residues: residues 1060 to 1071, 1088 to 1106, and 1166 to 1192; these read TNNKNDIDKEQS, EKSKDLYFNKNDIDNNDNK, and NKEENNKKEDDEKHFDDNTNEQKKNVD. Residues 1205-1215 are compositionally biased toward basic residues; sequence RKKRKKDVLER. Over residues 1261–1289 the composition is skewed to low complexity; sequence NNNNDNNKNNDNDNNNNNNDNIINNNNNN. 2 stretches are compositionally biased toward basic residues: residues 1660 to 1686 and 1704 to 1717; these read KEHKKKDKKYKMLFKKKEGKGKPGRKK and PRKKYERVKPRKSK.

This is an uncharacterized protein from Plasmodium falciparum (isolate 3D7).